The primary structure comprises 312 residues: Ribosomal protein L11 methyltransferase (312 aa).

The S-adenosyl-L-methionine site is built by T163, G184, D206, and N248.

The protein belongs to the methyltransferase superfamily. PrmA family.

Its subcellular location is the cytoplasm. It catalyses the reaction L-lysyl-[protein] + 3 S-adenosyl-L-methionine = N(6),N(6),N(6)-trimethyl-L-lysyl-[protein] + 3 S-adenosyl-L-homocysteine + 3 H(+). Methylates ribosomal protein L11. In Clostridium botulinum (strain 657 / Type Ba4), this protein is Ribosomal protein L11 methyltransferase.